A 491-amino-acid chain; its full sequence is MSDDKNQIKIKFTTNESDESLKVEETPLYVPVTLKRYGLSEIVNHLLETQKALESESGEDDEERKPVPFNFLINGELLRTSISDYLTRNGLSSEAFLTIEYTRAILPPSFQASFQNDDWISSLDSINRNLSAVTSSQLTITNPKILSGSYDGIVKTYNMSGKVEKQYMGHSAAVKSVKWISPTRIVSCGNDQQVRLWKTAYEGVVDQNEEDEEENEANEGDDGDNDMEKIEDGKTLAILEGHKAPVVDLAVNQQTKRILSAGYDLNVGFWSTNYKDMAKISIPEYDSNVISTSSKKRRKLALQDATIRRRSPLSLLLGHTEPVEGVIFDELDATVGYSVSQDHTIKTWDLVTLRCVDTRTTGFSLLSILQLPQVNLIATGSSARHINLHDPRVSASNTNSEVVNTKLVGHTNFVVGLSASPHNSNMFASSSHDGTVKVWDIRADKSLYTITREDGSTKSKIFGVCWDSEIGLISGGEDKRVQINKGSDISK.

Positions 8-103 are ubiquitin-like (UBL) domain; sequence IKIKFTTNES…EAFLTIEYTR (96 aa). The segment at 113-491 is sufficient for interaction with ERB1 and association with 66S pre-ribosomes; sequence SFQNDDWISS…QINKGSDISK (379 aa). WD repeat units lie at residues 128–167, 169–207, 241–280, 318–358, 360–399, 409–449, and 456–491; these read RNLSAVTSSQLTITNPKILSGSYDGIVKTYNMSGKVEKQY, GHSAAVKSVKWISPTRIVSCGNDQQVRLWKTAYEGVVDQ, GHKAPVVDLAVNQQTKRILSAGYDLNVGFWSTNYKDMAKI, GHTE…CVDT, TTGFSLLSILQLPQVNLIATGSSARHINLHDPRVSASNTN, GHTN…SLYT, and STKSKIFGVCWDSEIGLISGGEDKRVQINKGSDISK. The tract at residues 205 to 228 is disordered; sequence VDQNEEDEEENEANEGDDGDNDME. A compositionally biased stretch (acidic residues) spans 207–225; the sequence is QNEEDEEENEANEGDDGDN.

This sequence belongs to the WD repeat WDR12/YTM1 family. In terms of assembly, component of the NOP7 complex, composed of ERB1, NOP7 and YTM1. The complex is held together by ERB1, which interacts with NOP7 via its N-terminal domain and with YTM1 via a high-affinity interaction between the seven-bladed beta-propeller domains of the 2 proteins. The NOP7 complex associates with the 66S pre-ribosome. Interacts (via UBL domain) with MDN1 (via VWFA/MIDAS domain).

Its subcellular location is the nucleus. It localises to the nucleolus. The protein localises to the nucleoplasm. In terms of biological role, component of the NOP7 complex, which is required for maturation of the 25S and 5.8S ribosomal RNAs and formation of the 60S ribosome. This chain is Ribosome biogenesis protein YTM1, found in Lodderomyces elongisporus (strain ATCC 11503 / CBS 2605 / JCM 1781 / NBRC 1676 / NRRL YB-4239) (Yeast).